Here is a 271-residue protein sequence, read N- to C-terminus: Zinc finger protein 501 (271 aa).

C2H2-type zinc fingers lie at residues Ser22–His44, Tyr50–His72, Tyr78–His100, Tyr106–His128, Tyr134–His156, Phe162–His184, Tyr190–His212, Tyr218–His240, and Tyr246–His268.

Belongs to the krueppel C2H2-type zinc-finger protein family.

Its subcellular location is the nucleus. It is found in the nucleolus. In terms of biological role, may be involved in transcriptional regulation. Essential for Golgi structural integrity. The chain is Zinc finger protein 501 (ZNF501) from Pongo abelii (Sumatran orangutan).